Reading from the N-terminus, the 432-residue chain is Trigger factor (432 aa).

Residues 161-246 (EDRVTIDFTG…LKKVEERELP (86 aa)) enclose the PPIase FKBP-type domain.

Belongs to the FKBP-type PPIase family. Tig subfamily. Homodimer and monomer. In vivo most of the ribosomes are in complex with monomeric TF. Uncomplexed TF, however, is in a monomer-dimer equilibrium with approximately two thirds of TF existing in a dimeric state.

The protein localises to the cytoplasm. It carries out the reaction [protein]-peptidylproline (omega=180) = [protein]-peptidylproline (omega=0). Functionally, involved in protein export. Acts as a chaperone by maintaining the newly synthesized protein in an open conformation. Functions as a peptidyl-prolyl cis-trans isomerase. This Shigella boydii serotype 18 (strain CDC 3083-94 / BS512) protein is Trigger factor.